We begin with the raw amino-acid sequence, 87 residues long: uncharacterized protein (87 aa).

This is an uncharacterized protein from Ureaplasma parvum serovar 3 (strain ATCC 700970).